The sequence spans 197 residues: Phospholipid hydroperoxide glutathione peroxidase (197 aa).

Ser40 is subject to Phosphoserine. The active site involves Sec73. Position 73 (Sec73) is a non-standard amino acid, selenocysteine.

It belongs to the glutathione peroxidase family. In terms of assembly, monomer. Has a tendency to form higher mass oligomers. Interacts with FUNDC1; this interaction promotes GPX4 recruitment into mitochondria through TOM/TIM complex where it is degraded by mitophagy.

The protein resides in the mitochondrion. Its subcellular location is the cytoplasm. It catalyses the reaction a hydroperoxy polyunsaturated fatty acid + 2 glutathione = a hydroxy polyunsaturated fatty acid + glutathione disulfide + H2O. It carries out the reaction 2 glutathione + H2O2 = glutathione disulfide + 2 H2O. The catalysed reaction is tert-butyl hydroperoxide + 2 glutathione = tert-butanol + glutathione disulfide + H2O. The enzyme catalyses cumene hydroperoxide + 2 glutathione = 2-phenylpropan-2-ol + glutathione disulfide + H2O. It catalyses the reaction (9S)-hydroperoxy-(10E,12Z)-octadecadienoate + 2 glutathione = (9S)-hydroxy-(10E,12Z)-octadecadienoate + glutathione disulfide + H2O. It carries out the reaction (13S)-hydroperoxy-(9Z,11E)-octadecadienoate + 2 glutathione = (13S)-hydroxy-(9Z,11E)-octadecadienoate + glutathione disulfide + H2O. The catalysed reaction is (5S)-hydroperoxy-(6E,8Z,11Z,14Z)-eicosatetraenoate + 2 glutathione = (5S)-hydroxy-(6E,8Z,11Z,14Z)-eicosatetraenoate + glutathione disulfide + H2O. The enzyme catalyses (12R)-hydroperoxy-(5Z,8Z,10E,14Z)-eicosatetraenoate + 2 glutathione = (12R)-hydroxy-(5Z,8Z,10E,14Z)-eicosatetraenoate + glutathione disulfide + H2O. It catalyses the reaction (12S)-hydroperoxy-(5Z,8Z,10E,14Z)-eicosatetraenoate + 2 glutathione = (12S)-hydroxy-(5Z,8Z,10E,14Z)-eicosatetraenoate + glutathione disulfide + H2O. It carries out the reaction (15S)-hydroperoxy-(5Z,8Z,11Z,13E)-eicosatetraenoate + 2 glutathione = (15S)-hydroxy-(5Z,8Z,11Z,13E)-eicosatetraenoate + glutathione disulfide + H2O. The catalysed reaction is (5S)-hydroperoxy-(6E,8Z,11Z,14Z,17Z)-eicosapentaenoate + 2 glutathione = (5S)-hydroxy-(6E,8Z,11Z,14Z,17Z)-eicosapentaenoate + glutathione disulfide + H2O. The enzyme catalyses (12S)-hydroperoxy-(5Z,8Z,10E,14Z,17Z)-eicosapentaenoate + 2 glutathione = (12S)-hydroxy-(5Z,8Z,10E,14Z,17Z)-eicosapentaenoate + glutathione disulfide + H2O. It catalyses the reaction (15S)-hydroperoxy-(5Z,8Z,11Z,13E,17Z)-eicosapentaenoate + 2 glutathione = (15S)-hydroxy-(5Z,8Z,11Z,13E,17Z)-eicosapentaenoate + glutathione disulfide + H2O. It carries out the reaction (15S)-hydroperoxy-(11Z,13E)-eicosadienoate + 2 glutathione = (15S)-hydroxy-(11Z,13E)-eicosadienoate + glutathione disulfide + H2O. The catalysed reaction is (17S)-hydroperoxy-(4Z,7Z,10Z,13Z,15E,19Z)-docosahexaenoate + 2 glutathione = (17S)-hydroxy-(4Z,7Z,10Z,13Z,15E,19Z)-docosahexaenoate + glutathione disulfide + H2O. The enzyme catalyses a hydroperoxy-1,2-diacyl-glycero-3-phosphocholine + 2 glutathione = a hydroxy-1,2-diacyl-glycero-3-phosphocholine + glutathione disulfide + H2O. Functionally, essential antioxidant peroxidase that directly reduces phospholipid hydroperoxide even if they are incorporated in membranes and lipoproteins. Can also reduce fatty acid hydroperoxide, cholesterol hydroperoxide and thymine hydroperoxide. Plays a key role in protecting cells from oxidative damage by preventing membrane lipid peroxidation. Required to prevent cells from ferroptosis, a non-apoptotic cell death resulting from an iron-dependent accumulation of lipid reactive oxygen species. The presence of selenocysteine (Sec) versus Cys at the active site is essential for life: it provides resistance to overoxidation and prevents cells against ferroptosis. The presence of Sec at the active site is also essential for the survival of a specific type of parvalbumin-positive interneurons, thereby preventing against fatal epileptic seizures. May be required to protect cells from the toxicity of ingested lipid hydroperoxides. Required for normal sperm development and male fertility. Essential for maturation and survival of photoreceptor cells. Plays a role in a primary T-cell response to viral and parasitic infection by protecting T-cells from ferroptosis and by supporting T-cell expansion. Plays a role of glutathione peroxidase in platelets in the arachidonic acid metabolism. Reduces hydroperoxy ester lipids formed by a 15-lipoxygenase that may play a role as down-regulator of the cellular 15-lipoxygenase pathway. Can also reduce small soluble hydroperoxides such as H2O2, cumene hydroperoxide and tert-butyl hydroperoxide. The chain is Phospholipid hydroperoxide glutathione peroxidase from Pongo pygmaeus (Bornean orangutan).